A 338-amino-acid chain; its full sequence is Lipoate-protein ligase A (338 aa).

Positions 29–216 constitute a BPL/LPL catalytic domain; that stretch reads PATQRVLFLW…AFFAHYGERV (188 aa). Residues R71, 76-79, and K134 each bind ATP; that span reads GAVF. K134 is a (R)-lipoate binding site.

The protein belongs to the LplA family. As to quaternary structure, monomer.

It localises to the cytoplasm. It carries out the reaction L-lysyl-[lipoyl-carrier protein] + (R)-lipoate + ATP = N(6)-[(R)-lipoyl]-L-lysyl-[lipoyl-carrier protein] + AMP + diphosphate + H(+). Its pathway is protein modification; protein lipoylation via exogenous pathway; protein N(6)-(lipoyl)lysine from lipoate: step 1/2. The protein operates within protein modification; protein lipoylation via exogenous pathway; protein N(6)-(lipoyl)lysine from lipoate: step 2/2. Functionally, catalyzes both the ATP-dependent activation of exogenously supplied lipoate to lipoyl-AMP and the transfer of the activated lipoyl onto the lipoyl domains of lipoate-dependent enzymes. This chain is Lipoate-protein ligase A, found in Shigella sonnei (strain Ss046).